We begin with the raw amino-acid sequence, 258 residues long: Imidazole glycerol phosphate synthase subunit HisF (258 aa).

Residues D11 and D130 contribute to the active site.

The protein belongs to the HisA/HisF family. As to quaternary structure, heterodimer of HisH and HisF.

The protein localises to the cytoplasm. The enzyme catalyses 5-[(5-phospho-1-deoxy-D-ribulos-1-ylimino)methylamino]-1-(5-phospho-beta-D-ribosyl)imidazole-4-carboxamide + L-glutamine = D-erythro-1-(imidazol-4-yl)glycerol 3-phosphate + 5-amino-1-(5-phospho-beta-D-ribosyl)imidazole-4-carboxamide + L-glutamate + H(+). The protein operates within amino-acid biosynthesis; L-histidine biosynthesis; L-histidine from 5-phospho-alpha-D-ribose 1-diphosphate: step 5/9. Its function is as follows. IGPS catalyzes the conversion of PRFAR and glutamine to IGP, AICAR and glutamate. The HisF subunit catalyzes the cyclization activity that produces IGP and AICAR from PRFAR using the ammonia provided by the HisH subunit. The protein is Imidazole glycerol phosphate synthase subunit HisF of Blochmanniella pennsylvanica (strain BPEN).